The following is a 120-amino-acid chain: NAD(P)H-quinone oxidoreductase subunit 3, chloroplastic (120 aa).

A run of 3 helical transmembrane segments spans residues isoleucine 9–glycine 29, methionine 64–methionine 84, and valine 88–leucine 108.

The protein belongs to the complex I subunit 3 family. As to quaternary structure, NDH is composed of at least 16 different subunits, 5 of which are encoded in the nucleus.

Its subcellular location is the plastid. It is found in the chloroplast thylakoid membrane. The enzyme catalyses a plastoquinone + NADH + (n+1) H(+)(in) = a plastoquinol + NAD(+) + n H(+)(out). It carries out the reaction a plastoquinone + NADPH + (n+1) H(+)(in) = a plastoquinol + NADP(+) + n H(+)(out). In terms of biological role, NDH shuttles electrons from NAD(P)H:plastoquinone, via FMN and iron-sulfur (Fe-S) centers, to quinones in the photosynthetic chain and possibly in a chloroplast respiratory chain. The immediate electron acceptor for the enzyme in this species is believed to be plastoquinone. Couples the redox reaction to proton translocation, and thus conserves the redox energy in a proton gradient. This is NAD(P)H-quinone oxidoreductase subunit 3, chloroplastic from Panax ginseng (Korean ginseng).